We begin with the raw amino-acid sequence, 661 residues long: Ubiquitin-associated and SH3 domain-containing protein A (661 aa).

In terms of domain architecture, UBA spans lysine 15 to histidine 60. One can recognise an SH3 domain in the interval valine 276–glutamate 341. The phosphatase-like stretch occupies residues arginine 395 to asparagine 661.

Homodimer or homooligomer. Interacts with CBL. Part of a complex containing CBL and activated EGFR. Interacts with ubiquitin and with mono-ubiquitinated proteins. Interacts with dynamin. As to expression, highest expression of UBASH3A in tissues belonging to the immune system, including spleen, peripheral blood leukocytes, thymus and bone marrow.

Its subcellular location is the cytoplasm. It is found in the nucleus. Its function is as follows. Interferes with CBL-mediated down-regulation and degradation of receptor-type tyrosine kinases. Promotes accumulation of activated target receptors, such as T-cell receptors, EGFR and PDGFRB, on the cell surface. Exhibits negligible protein tyrosine phosphatase activity at neutral pH. May act as a dominant-negative regulator of UBASH3B-dependent dephosphorylation. May inhibit dynamin-dependent endocytic pathways by functionally sequestering dynamin via its SH3 domain. The sequence is that of Ubiquitin-associated and SH3 domain-containing protein A (UBASH3A) from Homo sapiens (Human).